The sequence spans 344 residues: ATPase GET3 (344 aa).

Lys26–Thr33 contacts ATP. Asp57 is an active-site residue. ATP contacts are provided by Glu239 and Asn266. Positions 276 and 279 each coordinate Zn(2+).

The protein belongs to the arsA ATPase family. As to quaternary structure, homodimer. Component of the Golgi to ER traffic (GET) complex, which is composed of GET1, GET2 and GET3. Within the complex, GET1 and GET2 form a heterotetramer which is stabilized by phosphatidylinositol binding and which binds to the GET3 homodimer. Interacts with the chloride channel protein GEF1.

Its subcellular location is the cytoplasm. It localises to the endoplasmic reticulum. The protein resides in the golgi apparatus. Functionally, ATPase required for the post-translational delivery of tail-anchored (TA) proteins to the endoplasmic reticulum. Recognizes and selectively binds the transmembrane domain of TA proteins in the cytosol. This complex then targets to the endoplasmic reticulum by membrane-bound receptors GET1 and GET2, where the tail-anchored protein is released for insertion. This process is regulated by ATP binding and hydrolysis. ATP binding drives the homodimer towards the closed dimer state, facilitating recognition of newly synthesized TA membrane proteins. ATP hydrolysis is required for insertion. Subsequently, the homodimer reverts towards the open dimer state, lowering its affinity for the GET1-GET2 receptor, and returning it to the cytosol to initiate a new round of targeting. Cooperates with the HDEL receptor ERD2 to mediate the ATP-dependent retrieval of resident ER proteins that contain a C-terminal H-D-E-L retention signal from the Golgi to the ER. Involved in low-level resistance to the oxyanions arsenite and arsenate, and in heat tolerance. This Komagataella phaffii (strain GS115 / ATCC 20864) (Yeast) protein is ATPase GET3.